The chain runs to 156 residues: Small ribosomal subunit protein uS7 (156 aa).

Belongs to the universal ribosomal protein uS7 family. As to quaternary structure, part of the 30S ribosomal subunit. Contacts proteins S9 and S11.

In terms of biological role, one of the primary rRNA binding proteins, it binds directly to 16S rRNA where it nucleates assembly of the head domain of the 30S subunit. Is located at the subunit interface close to the decoding center, probably blocks exit of the E-site tRNA. The protein is Small ribosomal subunit protein uS7 of Carboxydothermus hydrogenoformans (strain ATCC BAA-161 / DSM 6008 / Z-2901).